The primary structure comprises 534 residues: MTKYIFVTGGVVSSIGKGIVAASLGRLLKNRGLKVTIQKFDPYINIDPGTMSPYQHGEVYVTDDGAETDLDLGHYERFIDINLNKYSNVTTGKIYSEVLRKERKGEYLGATVQVIPHITDALKEKIKRAASTTDSDVIITEVGGTVGDIESLPFLEALRQMKADVGSENVMYIHTTLLPYLKAAGEMKTKPTQHSVKELRGLGIQPNMLVIRTEEPVEQGIKNKLAQFCDVNSEAVIESRDVEHLYQIPLNLQAQSMDQIVCDHLKLNAPQADMTEWSAMVDKVMNLRKTTKIALVGKYVELPDAYLSVVEALKHSGYANDTAIDLKWVNANDVTVDNAADLLGDADGIIVPGGFGQRGTEGKIQAIRYARENDVPMLGICLGMQLTCVEFARHVLNMEGANSFELEPSTKYPIIDIMRDQIDIEDMGGTLRLGLYPCKLKPGSKAAMAYNNQEVVQRRHRHRYEFNNKFRSEFEAAGFVFSGVSPDNRLVEIVELKEKKFFVAAQYHPELQSRPNRPEELYTAFVTAAIKNSN.

An amidoligase domain region spans residues Met1–Leu267. Ser13 provides a ligand contact to CTP. Ser13 contacts UTP. Ser14–Ile19 provides a ligand contact to ATP. Position 54 (Tyr54) interacts with L-glutamine. An ATP-binding site is contributed by Asp71. Mg(2+) is bound by residues Asp71 and Glu141. Residues Asp148–Glu150, Lys188–Gln193, and Lys224 contribute to the CTP site. Residues Lys188–Gln193 and Lys224 contribute to the UTP site. An ATP-binding site is contributed by Arg240–Val242. Positions Lys292–Asn534 constitute a Glutamine amidotransferase type-1 domain. Gly354 contacts L-glutamine. Cys381 serves as the catalytic Nucleophile; for glutamine hydrolysis. L-glutamine-binding positions include Leu382–Gln385, Glu405, and Arg463. Catalysis depends on residues His508 and Glu510.

Belongs to the CTP synthase family. Homotetramer.

The catalysed reaction is UTP + L-glutamine + ATP + H2O = CTP + L-glutamate + ADP + phosphate + 2 H(+). It carries out the reaction L-glutamine + H2O = L-glutamate + NH4(+). It catalyses the reaction UTP + NH4(+) + ATP = CTP + ADP + phosphate + 2 H(+). It participates in pyrimidine metabolism; CTP biosynthesis via de novo pathway; CTP from UDP: step 2/2. Allosterically activated by GTP, when glutamine is the substrate; GTP has no effect on the reaction when ammonia is the substrate. The allosteric effector GTP functions by stabilizing the protein conformation that binds the tetrahedral intermediate(s) formed during glutamine hydrolysis. Inhibited by the product CTP, via allosteric rather than competitive inhibition. In terms of biological role, catalyzes the ATP-dependent amination of UTP to CTP with either L-glutamine or ammonia as the source of nitrogen. Regulates intracellular CTP levels through interactions with the four ribonucleotide triphosphates. The polypeptide is CTP synthase (Streptococcus pyogenes serotype M4 (strain MGAS10750)).